We begin with the raw amino-acid sequence, 435 residues long: Glutamate-1-semialdehyde 2,1-aminomutase (435 aa).

Residue Lys269 is modified to N6-(pyridoxal phosphate)lysine.

Belongs to the class-III pyridoxal-phosphate-dependent aminotransferase family. HemL subfamily. As to quaternary structure, homodimer. Requires pyridoxal 5'-phosphate as cofactor.

The protein resides in the cytoplasm. The enzyme catalyses (S)-4-amino-5-oxopentanoate = 5-aminolevulinate. It functions in the pathway porphyrin-containing compound metabolism; protoporphyrin-IX biosynthesis; 5-aminolevulinate from L-glutamyl-tRNA(Glu): step 2/2. This Gemmatimonas aurantiaca (strain DSM 14586 / JCM 11422 / NBRC 100505 / T-27) protein is Glutamate-1-semialdehyde 2,1-aminomutase.